Consider the following 157-residue polypeptide: Transcription elongation factor GreA (157 aa).

Residues methionine 1–glutamate 24 are disordered. Residues histidine 12–glutamate 24 are compositionally biased toward basic and acidic residues. Residues glutamate 53–glutamate 73 adopt a coiled-coil conformation.

The protein belongs to the GreA/GreB family.

Functionally, necessary for efficient RNA polymerase transcription elongation past template-encoded arresting sites. The arresting sites in DNA have the property of trapping a certain fraction of elongating RNA polymerases that pass through, resulting in locked ternary complexes. Cleavage of the nascent transcript by cleavage factors such as GreA or GreB allows the resumption of elongation from the new 3'terminus. GreA releases sequences of 2 to 3 nucleotides. The protein is Transcription elongation factor GreA of Beijerinckia indica subsp. indica (strain ATCC 9039 / DSM 1715 / NCIMB 8712).